Here is a 339-residue protein sequence, read N- to C-terminus: Ketol-acid reductoisomerase (NADP(+)) (339 aa).

Residues 1–182 (MRVYYDRDAD…GGGRAGIIET (182 aa)) form the KARI N-terminal Rossmann domain. NADP(+) contacts are provided by residues 24–27 (YGSQ), R48, S51, T53, and 83–86 (DELQ). Residue H108 is part of the active site. NADP(+) is bound at residue G134. Positions 183–328 (TFKEECETDL…AKLRGMMPWI (146 aa)) constitute a KARI C-terminal knotted domain. Positions 191, 195, 227, and 231 each coordinate Mg(2+). Residue S252 participates in substrate binding.

The protein belongs to the ketol-acid reductoisomerase family. Requires Mg(2+) as cofactor.

The catalysed reaction is (2R)-2,3-dihydroxy-3-methylbutanoate + NADP(+) = (2S)-2-acetolactate + NADPH + H(+). It catalyses the reaction (2R,3R)-2,3-dihydroxy-3-methylpentanoate + NADP(+) = (S)-2-ethyl-2-hydroxy-3-oxobutanoate + NADPH + H(+). It participates in amino-acid biosynthesis; L-isoleucine biosynthesis; L-isoleucine from 2-oxobutanoate: step 2/4. The protein operates within amino-acid biosynthesis; L-valine biosynthesis; L-valine from pyruvate: step 2/4. In terms of biological role, involved in the biosynthesis of branched-chain amino acids (BCAA). Catalyzes an alkyl-migration followed by a ketol-acid reduction of (S)-2-acetolactate (S2AL) to yield (R)-2,3-dihydroxy-isovalerate. In the isomerase reaction, S2AL is rearranged via a Mg-dependent methyl migration to produce 3-hydroxy-3-methyl-2-ketobutyrate (HMKB). In the reductase reaction, this 2-ketoacid undergoes a metal-dependent reduction by NADPH to yield (R)-2,3-dihydroxy-isovalerate. The chain is Ketol-acid reductoisomerase (NADP(+)) from Methylobacterium radiotolerans (strain ATCC 27329 / DSM 1819 / JCM 2831 / NBRC 15690 / NCIMB 10815 / 0-1).